The sequence spans 208 residues: Proheparin-binding EGF-like growth factor (208 aa).

An N-terminal signal peptide occupies residues 1–19 (MKLLPSVVLKLLLAAVLSA). Positions 20–62 (LVTGESLEQLRRGLAAGTSNPDPSTGSTDQLLRLGGGRDRKVR) are excised as a propeptide. Over 20–160 (LVTGESLEQL…ENRLYTYDHT (141 aa)) the chain is Extracellular. Residues 34–55 (AAGTSNPDPSTGSTDQLLRLGG) are disordered. Residues 36–49 (GTSNPDPSTGSTDQ) show a composition bias toward polar residues. Thr-75 and Thr-85 each carry an O-linked (GalNAc...) threonine glycan. The disordered stretch occupies residues 81–104 (QALATPSKEEHGKRKKKGKGLGKK). Residues 93 to 102 (KRKKKGKGLG) show a composition bias toward basic residues. The region spanning 104 to 144 (KRDPCLRKYKDFCIHGECKYVKELRAPSCICHPGYHGERCH) is the EGF-like domain. Cystine bridges form between Cys-108–Cys-121, Cys-116–Cys-132, and Cys-134–Cys-143. Residues 136-148 (PGYHGERCHGLSL) are toxin-binding domain. Residues 149-208 (PVENRLYTYDHTTILAVVAVVLSSVCLLVIVGLLMFRYHRRGGYDVENEEKVKLGMTNSH) constitute a propeptide, C-terminal. A helical transmembrane segment spans residues 161–184 (TILAVVAVVLSSVCLLVIVGLLMF). The Cytoplasmic portion of the chain corresponds to 185–208 (RYHRRGGYDVENEEKVKLGMTNSH).

In terms of assembly, interacts with EGFR and ERBB4. Interacts with FBLN1. Post-translationally, O-glycosylated.

The protein resides in the secreted. It is found in the extracellular space. Its subcellular location is the cell membrane. Growth factor that mediates its effects via EGFR, ERBB2 and ERBB4. Required for normal cardiac valve formation and normal heart function. Promotes smooth muscle cell proliferation. May be involved in macrophage-mediated cellular proliferation. It is mitogenic for fibroblasts, but not endothelial cells. It is able to bind EGF receptor/EGFR with higher affinity than EGF itself and is a far more potent mitogen for smooth muscle cells than EGF. Also acts as a diphtheria toxin receptor. In Chlorocebus aethiops (Green monkey), this protein is Proheparin-binding EGF-like growth factor (HBEGF).